Consider the following 349-residue polypeptide: MISVGIVGGTGYTGVELLRLLLRHPQVTVRVLTSRTEAGKRVADMFPSLRGHTDLEFSDLNEDVLKQCDVVFFATPHGVAMKYAKGLVAAGVKVIDLAADFRLQNLEQFEKWYGLEHECPEILKDSVYGLSELNREKIKTAKVVGNPGCYPTTVQLGLAPLLQADVALIKPENIIIDAKSGVSGAGRKASLGMIYSENADNFKAYGVAGHRHHPEIVEALEHISGQKGVFDQIIFVPHLVPMIRGMLSTIYIDLTEEGANSDLQSLYEIYYANEKFVDVMPANSSPETRSVRGANELRIALYKPQPNKLVILSVQDNLVKGAAGQAVQNMNLMFNLDEDTGLTGIGLLP.

Cysteine 149 is an active-site residue.

This sequence belongs to the NAGSA dehydrogenase family. Type 1 subfamily.

The protein resides in the cytoplasm. It carries out the reaction N-acetyl-L-glutamate 5-semialdehyde + phosphate + NADP(+) = N-acetyl-L-glutamyl 5-phosphate + NADPH + H(+). The protein operates within amino-acid biosynthesis; L-arginine biosynthesis; N(2)-acetyl-L-ornithine from L-glutamate: step 3/4. Its function is as follows. Catalyzes the NADPH-dependent reduction of N-acetyl-5-glutamyl phosphate to yield N-acetyl-L-glutamate 5-semialdehyde. This is N-acetyl-gamma-glutamyl-phosphate reductase from Acinetobacter baylyi (strain ATCC 33305 / BD413 / ADP1).